Reading from the N-terminus, the 244-residue chain is Small ribosomal subunit protein eS4 (244 aa).

Positions Leu-43–Glu-106 constitute an S4 RNA-binding domain.

The protein belongs to the eukaryotic ribosomal protein eS4 family.

This Methanococcus maripaludis (strain C5 / ATCC BAA-1333) protein is Small ribosomal subunit protein eS4.